The chain runs to 281 residues: Bifunctional protein FolD (281 aa).

Residues 165–167 (GRG), threonine 192, and valine 233 each bind NADP(+).

Belongs to the tetrahydrofolate dehydrogenase/cyclohydrolase family. In terms of assembly, homodimer.

It carries out the reaction (6R)-5,10-methylene-5,6,7,8-tetrahydrofolate + NADP(+) = (6R)-5,10-methenyltetrahydrofolate + NADPH. The catalysed reaction is (6R)-5,10-methenyltetrahydrofolate + H2O = (6R)-10-formyltetrahydrofolate + H(+). Its pathway is one-carbon metabolism; tetrahydrofolate interconversion. Its function is as follows. Catalyzes the oxidation of 5,10-methylenetetrahydrofolate to 5,10-methenyltetrahydrofolate and then the hydrolysis of 5,10-methenyltetrahydrofolate to 10-formyltetrahydrofolate. This is Bifunctional protein FolD from Mycobacterium marinum (strain ATCC BAA-535 / M).